Here is a 337-residue protein sequence, read N- to C-terminus: MADSNELGSASRRLSVVTNHLIPIGFSPARADSVELCSASSMDDRFHKVHGEVPTHEVVWKKTDFFGEGDNKEFVDIIYEKALDEGIAKITINRPERRNAFRPQTVKELMRAFNDARDDSSVGVIILTGKGTKAFCSGGDQALRTQDGYADPNDVGRLNVLDLQVQIRRLPKPVIAMVAGYAVGGGHILHMVCDLTIAADNAIFGQTGPKVGSFDAGYGSSIMSRLVGPKKAREMWFMTRFYTASEAEKMGLINTVVPLEDLEKETVKWCREILRNSPTAIRVLKAALNAVDDGHAGLQGLGGDATLLFYGTEEATEGRTAYMHRRPPDFSKFHRRP.

Substrate contacts are provided by residues 97 to 98 (RR), lysine 133, 137 to 141 (SGGDQ), 181 to 185 (YAVGG), threonine 207, and serine 213. 206–208 (QTG) contributes to the hydrogencarbonate binding site.

It belongs to the enoyl-CoA hydratase/isomerase family. MenB subfamily. As to quaternary structure, homohexamer. It depends on hydrogencarbonate as a cofactor.

It is found in the peroxisome. It catalyses the reaction 2-succinylbenzoyl-CoA + H(+) = 1,4-dihydroxy-2-naphthoyl-CoA + H2O. In terms of biological role, involved in the biosynthesis of phylloquinone (vitamin K1). Converts o-succinylbenzoyl-CoA (OSB-CoA) to 1,4-dihydroxy-2-naphthoyl-CoA (DHNA-CoA). In Arabidopsis thaliana (Mouse-ear cress), this protein is 1,4-dihydroxy-2-naphthoyl-CoA synthase, peroxisomal (MENB).